We begin with the raw amino-acid sequence, 473 residues long: DNA gyrase subunit A (473 aa).

The 473-residue stretch at 1–473 folds into the Topo IIA-type catalytic domain; the sequence is MGNYHPHGNA…GFVSHNTEAR (473 aa). The active-site O-(5'-phospho-DNA)-tyrosine intermediate is tyrosine 49. The DOD-type homing endonuclease domain occupies 175–315; sequence LLGAFISEGF…VQQMLLEFGI (141 aa).

Belongs to the type II topoisomerase GyrA/ParC subunit family. As to quaternary structure, heterotetramer, composed of two GyrA and two GyrB chains. In the heterotetramer, GyrA contains the active site tyrosine that forms a transient covalent intermediate with DNA, while GyrB binds cofactors and catalyzes ATP hydrolysis. In terms of processing, this protein undergoes a protein self splicing that involves a post-translational excision of the intervening region (intein) followed by peptide ligation.

It localises to the cytoplasm. It catalyses the reaction ATP-dependent breakage, passage and rejoining of double-stranded DNA.. A type II topoisomerase that negatively supercoils closed circular double-stranded (ds) DNA in an ATP-dependent manner to modulate DNA topology and maintain chromosomes in an underwound state. Negative supercoiling favors strand separation, and DNA replication, transcription, recombination and repair, all of which involve strand separation. Also able to catalyze the interconversion of other topological isomers of dsDNA rings, including catenanes and knotted rings. Type II topoisomerases break and join 2 DNA strands simultaneously in an ATP-dependent manner. This chain is DNA gyrase subunit A (gyrA), found in Mycobacterium malmoense.